We begin with the raw amino-acid sequence, 259 residues long: MIQIDALPAFSDNYIWLLQDTAKRRCAVVDPGDAAPVERWLAANPEWVLSDILVTHHHNDHVGGVERLKQLSGARVCGPANERIPGRDLALDEGDKVDVLGVTFQVLAVPGHTLGHIAFFSDGPPTPVLFSGDTLFAAGCGRMFEGTPEQMQPALARLAALPEQTEVYCAHEYTLSNLRFAKAVEPTNTHVQQRFEDVTRLRAENRISLPSTIGLERLTNPFLRTSETLVKQKADEWKGHSNTSHVAVFAALRSWKDTF.

Residues His-56, His-58, Asp-60, His-61, His-112, Asp-133, and His-171 each contribute to the Zn(2+) site.

This sequence belongs to the metallo-beta-lactamase superfamily. Glyoxalase II family. In terms of assembly, monomer. The cofactor is Zn(2+).

It carries out the reaction an S-(2-hydroxyacyl)glutathione + H2O = a 2-hydroxy carboxylate + glutathione + H(+). Its pathway is secondary metabolite metabolism; methylglyoxal degradation; (R)-lactate from methylglyoxal: step 2/2. Thiolesterase that catalyzes the hydrolysis of S-D-lactoyl-glutathione to form glutathione and D-lactic acid. This is Hydroxyacylglutathione hydrolase from Pseudomonas putida (strain GB-1).